Here is a 692-residue protein sequence, read N- to C-terminus: Serine/threonine-protein kinase Nek8 (692 aa).

In terms of domain architecture, Protein kinase spans 4-258 (YERIRVVGRG…LSHIMAQPLC (255 aa)). ATP is bound by residues 10 to 18 (VGRGAFGIV) and K33. Residue D128 is the Proton acceptor of the active site. T162 carries the phosphothreonine; by autocatalysis modification. Positions 277 to 301 (AEKSVAPSNTGSRTTSVRCRGIPRG) are disordered. The segment covering 282–293 (APSNTGSRTTSV) has biased composition (polar residues). RCC1 repeat units follow at residues 312–350 (SSVY…VTRS), 410–461 (GIIM…LSTE), 462–513 (RELF…LTVP), 580–631 (GDCY…IGAE), and 632–684 (SEVY…AVRS).

The protein belongs to the protein kinase superfamily. NEK Ser/Thr protein kinase family. NIMA subfamily. In terms of assembly, interacts with PKD2; may regulate PKD2 targeting to the cilium. Interacts with ANKS6. Component of a complex containing at least ANKS6, INVS, NEK8 and NPHP3. ANKS6 may organize complex assembly by linking INVS and NPHP3 to NEK8 and INVS may target the complex to the proximal ciliary axoneme. Interacts with ANKS3. It depends on Mg(2+) as a cofactor. Highest expression in thyroid, adrenal gland and skin. Low levels in spleen, colon and uterus. Overexpressed in breast tumors, with highest expression in infiltrating ductal carcinomas and moderate levels in mucinous adenocarcinoma.

The protein localises to the cytoplasm. Its subcellular location is the cytoskeleton. The protein resides in the cell projection. It localises to the cilium. It is found in the microtubule organizing center. The protein localises to the centrosome. Its subcellular location is the cilium axoneme. The enzyme catalyses L-seryl-[protein] + ATP = O-phospho-L-seryl-[protein] + ADP + H(+). It carries out the reaction L-threonyl-[protein] + ATP = O-phospho-L-threonyl-[protein] + ADP + H(+). Its function is as follows. Required for renal tubular integrity. May regulate local cytoskeletal structure in kidney tubule epithelial cells. May regulate ciliary biogenesis through targeting of proteins to the cilia. Plays a role in organogenesis, and is involved in the regulation of the Hippo signaling pathway. The polypeptide is Serine/threonine-protein kinase Nek8 (NEK8) (Homo sapiens (Human)).